Reading from the N-terminus, the 427-residue chain is Inward rectifier potassium channel 2 (427 aa).

Topologically, residues 1–81 (MGSVRTNRYS…IFTTCVDIRW (81 aa)) are cytoplasmic. Cys-76 is subject to S-nitrosocysteine. Residues 82–106 (RWMLVIFCLAFVLSWLFFGCVFWLI) traverse the membrane as a helical segment. The Extracellular segment spans residues 107–128 (ALLHGDLDASKESKACVSEVNS). Residues 129-140 (FTAAFLFSIETQ) constitute an intramembrane region (helical; Pore-forming). Positions 141–147 (TTIGYGF) form an intramembrane region, pore-forming. Positions 142–147 (TIGYGF) match the Selectivity filter motif. Over 148 to 156 (RCVTDECPI) the chain is Extracellular. A helical membrane pass occupies residues 157 to 178 (AVFMVVFQSIVGCIIDAFIIGA). Residues 179–427 (VMAKMAKPKK…PRPLRRESEI (249 aa)) are Cytoplasmic-facing. Positions 181–208 (AKMAKPKKRNETLVFSHNAVIAMRDGKL) are polyphosphoinositide (PIP2)-binding. Residues 384–427 (SKEEDDSENGVPESTSTDTPPDIDLHNQASVPLEPRPLRRESEI) form a disordered region. The PDZ-binding motif lies at 425-427 (SEI).

It belongs to the inward rectifier-type potassium channel (TC 1.A.2.1) family. KCNJ2 subfamily. As to quaternary structure, homotetramer. Homomultimeric and heteromultimeric association with KCNJ4/Kir2.3. Can form heteromeric channels with Kir2.6/KCNJ18. Associates, via its PDZ-recognition domain, with a complex containing LIN7A, LIN7B, LIN7C, DLG1, CASK and APBA1. Post-translationally, S-nitrosylation increases the open probability and inward rectifying currents.

The protein localises to the cell membrane. It localises to the sarcolemma. It is found in the T-tubule. It catalyses the reaction K(+)(in) = K(+)(out). With respect to regulation, activated by phosphatidylinositol 4,5 biphosphate (PtdIns(4,5)P2). Inward rectifier potassium channels are characterized by a greater tendency to allow potassium to flow into the cell rather than out of it. Their voltage dependence is regulated by the concentration of extracellular potassium; as external potassium is raised, the voltage range of the channel opening shifts to more positive voltages. The inward rectification is mainly due to the blockage of outward current by internal magnesium. Can be blocked by extracellular barium and cesium. Probably participates in establishing action potential waveform and excitability of neuronal and muscle tissues. This chain is Inward rectifier potassium channel 2 (KCNJ2), found in Sus scrofa (Pig).